Here is a 149-residue protein sequence, read N- to C-terminus: D-aminoacyl-tRNA deacylase (149 aa).

The Gly-cisPro motif, important for rejection of L-amino acids signature appears at 137–138 (GP).

This sequence belongs to the DTD family. Homodimer.

The protein localises to the cytoplasm. It catalyses the reaction glycyl-tRNA(Ala) + H2O = tRNA(Ala) + glycine + H(+). The enzyme catalyses a D-aminoacyl-tRNA + H2O = a tRNA + a D-alpha-amino acid + H(+). Its function is as follows. An aminoacyl-tRNA editing enzyme that deacylates mischarged D-aminoacyl-tRNAs. Also deacylates mischarged glycyl-tRNA(Ala), protecting cells against glycine mischarging by AlaRS. Acts via tRNA-based rather than protein-based catalysis; rejects L-amino acids rather than detecting D-amino acids in the active site. By recycling D-aminoacyl-tRNA to D-amino acids and free tRNA molecules, this enzyme counteracts the toxicity associated with the formation of D-aminoacyl-tRNA entities in vivo and helps enforce protein L-homochirality. The protein is D-aminoacyl-tRNA deacylase of Clostridium novyi (strain NT).